A 2240-amino-acid chain; its full sequence is Cadherin-89D (2240 aa).

Cadherin domains lie at 70 to 179 (SEGV…APEF), 180 to 295 (LNVP…PPKF), 296 to 411 (TEGV…VPEF), 412 to 528 (EADY…TPKF), and 529 to 643 (EHGN…APYE). N114, N119, N191, N278, N334, N417, N585, N720, N752, N822, N833, N983, N989, N1006, N1255, N1318, N1486, N1529, and N1556 each carry an N-linked (GlcNAc...) asparagine glycan. A disordered region spans residues 814–844 (MPSEPTSRNITMGSRFRSRNRSRSSKSKRRL). 5 Cadherin domains span residues 824–927 (TMGS…APKF), 928–1087 (NALT…APMF), 1171–1284 (TTKC…APTF), 1285–1389 (KKSW…RPEF), and 1411–1520 (MLPV…PPKS). Residues 829–844 (FRSRNRSRSSKSKRRL) show a composition bias toward basic residues. 2 Cadherin domains span residues 1534 to 1660 (QHAY…APKF) and 1661 to 1774 (RGNG…MPVE). Residues 1884–1904 (FVTVVLLALISLGALIAACCY) form a helical membrane-spanning segment. Residues 1905–2240 (VCMRQKRRLW…LEFSKSNSLF (336 aa)) are Cytoplasmic-facing. Disordered regions lie at residues 1930–1972 (IAGI…PESV) and 2121–2140 (AHLE…EDSL). Residues 1939 to 1952 (QKQRRQRQQRHTQR) are compositionally biased toward basic residues. Polar residues predominate over residues 1953 to 1964 (CSKGSTGSQRPT).

It is found in the cell membrane. In terms of biological role, cadherins are calcium-dependent cell adhesion proteins. They preferentially interact with themselves in a homophilic manner in connecting cells. The chain is Cadherin-89D (Cad89D) from Drosophila melanogaster (Fruit fly).